Consider the following 207-residue polypeptide: NADH-quinone oxidoreductase subunit C (207 aa).

This sequence belongs to the complex I 30 kDa subunit family. In terms of assembly, NDH-1 is composed of 14 different subunits. Subunits NuoB, C, D, E, F, and G constitute the peripheral sector of the complex.

Its subcellular location is the cell inner membrane. The catalysed reaction is a quinone + NADH + 5 H(+)(in) = a quinol + NAD(+) + 4 H(+)(out). NDH-1 shuttles electrons from NADH, via FMN and iron-sulfur (Fe-S) centers, to quinones in the respiratory chain. The immediate electron acceptor for the enzyme in this species is believed to be ubiquinone. Couples the redox reaction to proton translocation (for every two electrons transferred, four hydrogen ions are translocated across the cytoplasmic membrane), and thus conserves the redox energy in a proton gradient. The polypeptide is NADH-quinone oxidoreductase subunit C (Thermus thermophilus (strain ATCC BAA-163 / DSM 7039 / HB27)).